We begin with the raw amino-acid sequence, 201 residues long: Small ribosomal subunit protein uS2 (201 aa).

Belongs to the universal ribosomal protein uS2 family.

This Nanoarchaeum equitans (strain Kin4-M) protein is Small ribosomal subunit protein uS2.